Reading from the N-terminus, the 315-residue chain is Protease HtpX homolog (315 aa).

The helical transmembrane segment at 16–36 (LFMGIGYLIGGASGALIALVV) threads the bilayer. Position 130 (H130) interacts with Zn(2+). E131 is a catalytic residue. H134 provides a ligand contact to Zn(2+). Helical transmembrane passes span 145–165 (ITAT…FFGG) and 172–192 (GPGL…AMLV). Residue E201 coordinates Zn(2+). Residues 282–315 (GGGGASIGRPAGPSPRGAPRSPWSGQPRARGPWG) form a disordered region. A compositionally biased stretch (low complexity) spans 288-303 (IGRPAGPSPRGAPRSP).

The protein belongs to the peptidase M48B family. Zn(2+) serves as cofactor.

Its subcellular location is the cell inner membrane. This is Protease HtpX homolog from Rhodopseudomonas palustris (strain BisB5).